The chain runs to 237 residues: Pyridoxine 5'-phosphate synthase (237 aa).

Positions 7 and 18 each coordinate 3-amino-2-oxopropyl phosphate. His-43 functions as the Proton acceptor in the catalytic mechanism. 1-deoxy-D-xylulose 5-phosphate-binding residues include Arg-45 and His-50. The Proton acceptor role is filled by Glu-70. Thr-100 contributes to the 1-deoxy-D-xylulose 5-phosphate binding site. The Proton donor role is filled by His-190. Residues Asp-191 and 213–214 (GH) each bind 3-amino-2-oxopropyl phosphate.

It belongs to the PNP synthase family. As to quaternary structure, homooctamer; tetramer of dimers.

The protein resides in the cytoplasm. It carries out the reaction 3-amino-2-oxopropyl phosphate + 1-deoxy-D-xylulose 5-phosphate = pyridoxine 5'-phosphate + phosphate + 2 H2O + H(+). It functions in the pathway cofactor biosynthesis; pyridoxine 5'-phosphate biosynthesis; pyridoxine 5'-phosphate from D-erythrose 4-phosphate: step 5/5. Its function is as follows. Catalyzes the complicated ring closure reaction between the two acyclic compounds 1-deoxy-D-xylulose-5-phosphate (DXP) and 3-amino-2-oxopropyl phosphate (1-amino-acetone-3-phosphate or AAP) to form pyridoxine 5'-phosphate (PNP) and inorganic phosphate. The chain is Pyridoxine 5'-phosphate synthase from Christiangramia forsetii (strain DSM 17595 / CGMCC 1.15422 / KT0803) (Gramella forsetii).